Reading from the N-terminus, the 765-residue chain is uncharacterized protein (765 aa).

Disordered stretches follow at residues 9-61, 128-164, 265-289, 301-373, 409-526, 540-560, and 668-765; these read NDGN…PSSV, QQQQ…NYTS, TTSS…NITT, WTTT…TYIQ, IGNN…NQSN, PTKK…KYSE, and NSNT…KSRI. Composition is skewed to low complexity over residues 40-61 and 143-161; these read SNNI…PSSV and SNKS…NNNN. Low complexity-rich tracts occupy residues 301 to 311, 325 to 344, 353 to 373, 414 to 428, 438 to 485, 495 to 504, and 513 to 526; these read WTTTKPTSSTK, YDSP…STSS, IQPT…TYIQ, SNHT…SLST, NNNN…INNN, DNQSSYSSPD, and SQQQ…NQSN. The segment covering 668-745 has biased composition (low complexity); the sequence is NSNTDNYNYY…NNSRNNYNNN (78 aa).

This is an uncharacterized protein from Dictyostelium discoideum (Social amoeba).